A 386-amino-acid polypeptide reads, in one-letter code: Putative acid--amine ligase YgiC (386 aa).

Arginine 100–aspartate 102 serves as a coordination point for ATP. Positions 102, 115, and 117 each coordinate Mg(2+). ATP contacts are provided by residues lysine 267, lysine 302, glycine 309, glutamine 336, and leucine 371–threonine 373.

Belongs to the glutathionylspermidine synthase preATP-grasp family.

Functionally, may be a ligase forming an amide bond. Shows ATPase activity. This chain is Putative acid--amine ligase YgiC (ygiC), found in Escherichia coli O157:H7.